Here is a 319-residue protein sequence, read N- to C-terminus: Phenoxybenzoate dioxygenase subunit beta (319 aa).

One can recognise an FAD-binding FR-type domain in the interval 7–109; that stretch reads MAPVSLRIHA…DGPSNHFALD (103 aa). 113 to 223 lines the NAD(+) pocket; that stretch reads PHAVFIAGGI…PARVHLEYFA (111 aa). Residues 234–319 enclose the 2Fe-2S ferredoxin-type domain; the sequence is FVVHLARSGR…SKTAELTLDL (86 aa). The [2Fe-2S] cluster site is built by Cys268, Cys273, Cys276, and Cys306.

Belongs to the PDR/VanB family. As to quaternary structure, this dioxygenase system consists of two proteins: the alpha subunit (PobA) and a subunit (PobB) that acts as a ferredoxin and a ferredoxin reductase. Requires FMN as cofactor.

The protein operates within aromatic compound metabolism; carboxydiphenyl ether degradation. Its function is as follows. Degrades exclusively diarylether compounds having carboxyl groups in the 3- or 4-position. Yields a hemiacetal that spontaneously hydrolyzes to phenol and protocatechuate. The polypeptide is Phenoxybenzoate dioxygenase subunit beta (pobB) (Ectopseudomonas oleovorans (Pseudomonas oleovorans)).